The primary structure comprises 296 residues: 4-hydroxy-tetrahydrodipicolinate synthase (296 aa).

T49 serves as a coordination point for pyruvate. The Proton donor/acceptor role is filled by Y137. K166 serves as the catalytic Schiff-base intermediate with substrate. I208 contributes to the pyruvate binding site.

It belongs to the DapA family. Homotetramer; dimer of dimers.

Its subcellular location is the cytoplasm. The catalysed reaction is L-aspartate 4-semialdehyde + pyruvate = (2S,4S)-4-hydroxy-2,3,4,5-tetrahydrodipicolinate + H2O + H(+). The protein operates within amino-acid biosynthesis; L-lysine biosynthesis via DAP pathway; (S)-tetrahydrodipicolinate from L-aspartate: step 3/4. In terms of biological role, catalyzes the condensation of (S)-aspartate-beta-semialdehyde [(S)-ASA] and pyruvate to 4-hydroxy-tetrahydrodipicolinate (HTPA). This is 4-hydroxy-tetrahydrodipicolinate synthase from Chlorobium luteolum (strain DSM 273 / BCRC 81028 / 2530) (Pelodictyon luteolum).